We begin with the raw amino-acid sequence, 154 residues long: S-ribosylhomocysteine lyase (154 aa).

The Fe cation site is built by His58, His62, and Cys125.

The protein belongs to the LuxS family. As to quaternary structure, homodimer. It depends on Fe cation as a cofactor.

It catalyses the reaction S-(5-deoxy-D-ribos-5-yl)-L-homocysteine = (S)-4,5-dihydroxypentane-2,3-dione + L-homocysteine. Its function is as follows. Involved in the synthesis of autoinducer 2 (AI-2) which is secreted by bacteria and is used to communicate both the cell density and the metabolic potential of the environment. The regulation of gene expression in response to changes in cell density is called quorum sensing. Catalyzes the transformation of S-ribosylhomocysteine (RHC) to homocysteine (HC) and 4,5-dihydroxy-2,3-pentadione (DPD). The polypeptide is S-ribosylhomocysteine lyase (Dichelobacter nodosus (strain VCS1703A)).